The sequence spans 352 residues: Pyruvate dehydrogenase E1 component subunit beta, mitochondrial (352 aa).

Residues 1 to 21 (MALRKCGNLFVARLAGTSTRA) constitute a mitochondrion transit peptide. Residue E81 coordinates thiamine diphosphate. K(+) is bound by residues I134, A182, I183, D185, and N187.

Tetramer of 2 alpha and 2 beta subunits. The cofactor is thiamine diphosphate.

It localises to the mitochondrion matrix. It catalyses the reaction N(6)-[(R)-lipoyl]-L-lysyl-[protein] + pyruvate + H(+) = N(6)-[(R)-S(8)-acetyldihydrolipoyl]-L-lysyl-[protein] + CO2. In terms of biological role, the pyruvate dehydrogenase complex catalyzes the overall conversion of pyruvate to acetyl-CoA and CO(2). It contains multiple copies of three enzymatic components: pyruvate dehydrogenase (E1), dihydrolipoamide acetyltransferase (E2) and lipoamide dehydrogenase (E3). This chain is Pyruvate dehydrogenase E1 component subunit beta, mitochondrial (pdhb-1), found in Caenorhabditis elegans.